The following is a 347-amino-acid chain: GMP reductase (347 aa).

108–131 (AEFEKVKKIMALSEEFVFICIDIA) contacts NADP(+). K(+) is bound by residues glycine 181 and glycine 183. The active-site Thioimidate intermediate is the cysteine 186. NADP(+) is bound at residue 216–239 (IIGDGGCSCAGDVSKAFGGGADFV).

Belongs to the IMPDH/GMPR family. GuaC type 1 subfamily. Homotetramer.

The enzyme catalyses IMP + NH4(+) + NADP(+) = GMP + NADPH + 2 H(+). In terms of biological role, catalyzes the irreversible NADPH-dependent deamination of GMP to IMP. It functions in the conversion of nucleobase, nucleoside and nucleotide derivatives of G to A nucleotides, and in maintaining the intracellular balance of A and G nucleotides. The polypeptide is GMP reductase (Vibrio atlanticus (strain LGP32) (Vibrio splendidus (strain Mel32))).